Consider the following 311-residue polypeptide: Aspartate carbamoyltransferase catalytic subunit (311 aa).

Positions 55 and 56 each coordinate carbamoyl phosphate. Residue K85 coordinates L-aspartate. 3 residues coordinate carbamoyl phosphate: R106, H135, and Q138. 2 residues coordinate L-aspartate: R168 and R230. Carbamoyl phosphate is bound by residues L268 and P269.

It belongs to the aspartate/ornithine carbamoyltransferase superfamily. ATCase family. Heterododecamer (2C3:3R2) of six catalytic PyrB chains organized as two trimers (C3), and six regulatory PyrI chains organized as three dimers (R2).

It catalyses the reaction carbamoyl phosphate + L-aspartate = N-carbamoyl-L-aspartate + phosphate + H(+). Its pathway is pyrimidine metabolism; UMP biosynthesis via de novo pathway; (S)-dihydroorotate from bicarbonate: step 2/3. Its function is as follows. Catalyzes the condensation of carbamoyl phosphate and aspartate to form carbamoyl aspartate and inorganic phosphate, the committed step in the de novo pyrimidine nucleotide biosynthesis pathway. The chain is Aspartate carbamoyltransferase catalytic subunit from Yersinia pseudotuberculosis serotype O:1b (strain IP 31758).